Here is a 945-residue protein sequence, read N- to C-terminus: Isoleucine--tRNA ligase (945 aa).

Residues 66–76 (PYANGDIHLGH) carry the 'HIGH' region motif. Glu581 contributes to the L-isoleucyl-5'-AMP binding site. Residues 622 to 626 (KMSKS) carry the 'KMSKS' region motif. Lys625 is an ATP binding site. Zn(2+) contacts are provided by Cys908, Cys911, Cys928, and Cys931.

It belongs to the class-I aminoacyl-tRNA synthetase family. IleS type 1 subfamily. In terms of assembly, monomer. Requires Zn(2+) as cofactor.

The protein localises to the cytoplasm. It catalyses the reaction tRNA(Ile) + L-isoleucine + ATP = L-isoleucyl-tRNA(Ile) + AMP + diphosphate. Its function is as follows. Catalyzes the attachment of isoleucine to tRNA(Ile). As IleRS can inadvertently accommodate and process structurally similar amino acids such as valine, to avoid such errors it has two additional distinct tRNA(Ile)-dependent editing activities. One activity is designated as 'pretransfer' editing and involves the hydrolysis of activated Val-AMP. The other activity is designated 'posttransfer' editing and involves deacylation of mischarged Val-tRNA(Ile). This chain is Isoleucine--tRNA ligase, found in Burkholderia ambifaria (strain MC40-6).